Consider the following 155-residue polypeptide: SsrA-binding protein (155 aa).

The segment at 132 to 155 (DKREDLKQKQMKRDVDRAIKDHMR) is disordered.

The protein belongs to the SmpB family.

The protein localises to the cytoplasm. Functionally, required for rescue of stalled ribosomes mediated by trans-translation. Binds to transfer-messenger RNA (tmRNA), required for stable association of tmRNA with ribosomes. tmRNA and SmpB together mimic tRNA shape, replacing the anticodon stem-loop with SmpB. tmRNA is encoded by the ssrA gene; the 2 termini fold to resemble tRNA(Ala) and it encodes a 'tag peptide', a short internal open reading frame. During trans-translation Ala-aminoacylated tmRNA acts like a tRNA, entering the A-site of stalled ribosomes, displacing the stalled mRNA. The ribosome then switches to translate the ORF on the tmRNA; the nascent peptide is terminated with the 'tag peptide' encoded by the tmRNA and targeted for degradation. The ribosome is freed to recommence translation, which seems to be the essential function of trans-translation. This chain is SsrA-binding protein, found in Oceanobacillus iheyensis (strain DSM 14371 / CIP 107618 / JCM 11309 / KCTC 3954 / HTE831).